A 2531-amino-acid polypeptide reads, in one-letter code: Neurogenic locus notch homolog protein 1 (2531 aa).

The first 18 residues, 1–18 (MPRLLAPLLCLTLLPALA), serve as a signal peptide directing secretion. Residues 19–1725 (ARGLRCSQPS…VEPPLPSQLH (1707 aa)) are Extracellular-facing. 4 consecutive EGF-like domains span residues 20 to 58 (RGLR…QRCQ), 59 to 99 (DPSP…PLCL), 102 to 139 (LANA…KSCQ), and 140 to 176 (QADP…PTCR). 33 cysteine pairs are disulfide-bonded: cysteine 24-cysteine 37, cysteine 31-cysteine 46, cysteine 48-cysteine 57, cysteine 63-cysteine 74, cysteine 68-cysteine 87, cysteine 89-cysteine 98, cysteine 106-cysteine 117, cysteine 111-cysteine 127, cysteine 129-cysteine 138, cysteine 144-cysteine 155, cysteine 149-cysteine 164, cysteine 166-cysteine 175, cysteine 182-cysteine 195, cysteine 189-cysteine 204, cysteine 206-cysteine 215, cysteine 222-cysteine 233, cysteine 227-cysteine 243, cysteine 245-cysteine 254, cysteine 261-cysteine 272, cysteine 266-cysteine 281, cysteine 283-cysteine 292, cysteine 299-cysteine 312, cysteine 306-cysteine 321, cysteine 323-cysteine 332, cysteine 339-cysteine 350, cysteine 344-cysteine 359, cysteine 361-cysteine 370, cysteine 376-cysteine 387, cysteine 381-cysteine 398, cysteine 400-cysteine 409, cysteine 416-cysteine 429, cysteine 423-cysteine 438, and cysteine 440-cysteine 449. A glycan (N-linked (GlcNAc...) asparagine) is linked at asparagine 41. O-linked (Glc...) serine glycosylation is present at serine 65. Threonine 73 carries an O-linked (Fuc...) threonine glycan. Threonine 116 carries O-linked (Fuc...) threonine glycosylation. An O-linked (Glc...) serine glycan is attached at serine 146. An EGF-like 5; calcium-binding domain is found at 178-216 (DVNECSQNPGLCRHGGTCHNEIGSYRCACRATHTGPHCE). O-linked (Fuc...) threonine glycosylation is present at threonine 194. The 38-residue stretch at 218–255 (PYVPCSPSPCQNGGTCRPTGDTTHECACLPGFAGQNCE) folds into the EGF-like 6 domain. The O-linked (Fuc...) threonine; alternate glycan is linked to threonine 232. An O-linked (GalNAc...) threonine; alternate glycan is attached at threonine 232. In terms of domain architecture, EGF-like 7; calcium-binding spans 257-293 (NVDDCPGNNCKNGGACVDGVNTYNCRCPPEWTGQYCT). The EGF-like 8; calcium-binding domain maps to 295-333 (DVDECQLMPNACQNGGTCHNSHGGYNCVCVNGWTGEDCS). Threonine 311 carries an O-linked (Fuc...) threonine glycan. An EGF-like 9; calcium-binding domain is found at 335–371 (NIDDCASAACFQGATCHDRVASFYCECPHGRTGLLCH). Residue serine 341 is glycosylated (O-linked (Glc...) serine). A glycan (O-linked (Fuc...) threonine) is linked at threonine 349. In terms of domain architecture, EGF-like 10 spans 372 to 410 (LNDACISNPCNEGSNCDTNPVNGKAICTCPSGYTGPACS). A glycan (O-linked (Glc...) serine) is linked at serine 378. The region spanning 412–450 (DVDECALGANPCEHAGKCLNTLGSFECQCLQGYTGPRCE) is the EGF-like 11; calcium-binding domain. The tract at residues 420 to 421 (AN) is interaction with DLL4. Residues threonine 432 and serine 435 each coordinate Ca(2+). Residue serine 435 is glycosylated (O-linked (Glc...) serine). The tract at residues 448–452 (RCEID) is interaction with DLL4. Aspartate 452, valine 453, and glutamate 455 together coordinate Ca(2+). In terms of domain architecture, EGF-like 12; calcium-binding spans 452-488 (DVNECISNPCQNDATCLDQIGEFQCICMPGYEGVYCE). Disulfide bonds link cysteine 456/cysteine 467, cysteine 461/cysteine 476, and cysteine 478/cysteine 487. O-linked (Glc...) serine glycosylation occurs at serine 458. An O-linked (Fuc...) threonine glycan is attached at threonine 466. The Ca(2+) site is built by aspartate 469 and glutamine 470. Ca(2+) is bound by residues asparagine 490, threonine 491, and glutamate 493. Residues 490–526 (NTDECASSPCLHNGRCVDKINEFLCQCPKGFSGHLCQ) form the EGF-like 13; calcium-binding domain. 75 disulfides stabilise this stretch: cysteine 494–cysteine 505, cysteine 499–cysteine 514, cysteine 516–cysteine 525, cysteine 532–cysteine 543, cysteine 537–cysteine 552, cysteine 554–cysteine 563, cysteine 570–cysteine 580, cysteine 575–cysteine 589, cysteine 591–cysteine 600, cysteine 607–cysteine 618, cysteine 612–cysteine 627, cysteine 629–cysteine 638, cysteine 645–cysteine 655, cysteine 650–cysteine 664, cysteine 666–cysteine 675, cysteine 682–cysteine 693, cysteine 687–cysteine 702, cysteine 704–cysteine 713, cysteine 720–cysteine 730, cysteine 725–cysteine 739, cysteine 741–cysteine 750, cysteine 757–cysteine 768, cysteine 762–cysteine 777, cysteine 779–cysteine 788, cysteine 795–cysteine 806, cysteine 800–cysteine 815, cysteine 817–cysteine 826, cysteine 833–cysteine 844, cysteine 838–cysteine 855, cysteine 857–cysteine 866, cysteine 873–cysteine 884, cysteine 878–cysteine 893, cysteine 895–cysteine 904, cysteine 911–cysteine 922, cysteine 916–cysteine 931, cysteine 933–cysteine 942, cysteine 949–cysteine 960, cysteine 954–cysteine 969, cysteine 971–cysteine 980, cysteine 987–cysteine 998, cysteine 992–cysteine 1007, cysteine 1009–cysteine 1018, cysteine 1025–cysteine 1036, cysteine 1030–cysteine 1045, cysteine 1047–cysteine 1056, cysteine 1063–cysteine 1074, cysteine 1068–cysteine 1083, cysteine 1085–cysteine 1094, cysteine 1101–cysteine 1122, cysteine 1116–cysteine 1131, cysteine 1133–cysteine 1142, cysteine 1149–cysteine 1160, cysteine 1154–cysteine 1169, cysteine 1171–cysteine 1180, cysteine 1187–cysteine 1198, cysteine 1192–cysteine 1207, cysteine 1209–cysteine 1218, cysteine 1225–cysteine 1244, cysteine 1238–cysteine 1253, cysteine 1255–cysteine 1264, cysteine 1271–cysteine 1284, cysteine 1276–cysteine 1293, cysteine 1295–cysteine 1304, cysteine 1311–cysteine 1322, cysteine 1316–cysteine 1334, cysteine 1336–cysteine 1345, cysteine 1352–cysteine 1363, cysteine 1357–cysteine 1372, cysteine 1374–cysteine 1383, cysteine 1391–cysteine 1403, cysteine 1397–cysteine 1414, cysteine 1416–cysteine 1425, cysteine 1449–cysteine 1472, cysteine 1454–cysteine 1467, and cysteine 1463–cysteine 1479. An O-linked (Glc...) serine glycan is attached at serine 496. Ca(2+) is bound by residues aspartate 507 and lysine 508. Residues 528-564 (DVDECASTPCKNGAKCLDGPNTYTCVCTEGYTGTHCE) form the EGF-like 14; calcium-binding domain. Residue serine 534 is glycosylated (O-linked (Glc...) serine). The EGF-like 15; calcium-binding domain maps to 566-601 (DIDECDPDPCHYGLCKDGVATFTCLCQPGYTGHHCE). Residues 603-639 (NINECHSQPCRHGGTCQDRDNYYLCLCLKGTTGPNCE) form the EGF-like 16; calcium-binding domain. Serine 609 carries O-linked (Glc...) serine glycosylation. The O-linked (Fuc...) threonine glycan is linked to threonine 617. The EGF-like 17; calcium-binding domain maps to 641–676 (NLDDCASNPCDSGTCLDKIDGYECACEPGYTGSMCN). An O-linked (Glc...) serine glycan is attached at serine 647. Residues 678-714 (NIDECAGSPCHNGGTCEDGIAGFTCRCPEGYHDPTCL) form the EGF-like 18; calcium-binding domain. Residue threonine 692 is glycosylated (O-linked (Fuc...) threonine). The region spanning 716-751 (EVNECNSNPCIHGACRDGLNGYKCDCAPGWSGTNCD) is the EGF-like 19; calcium-binding domain. The O-linked (Glc...) serine glycan is linked to serine 722. Positions 753–789 (NNNECESNPCVNGGTCKDMTSGYVCTCREGFSGPNCQ) constitute an EGF-like 20; calcium-binding domain. A glycan (O-linked (Glc...) serine) is linked at serine 759. O-linked (Fuc...) threonine glycosylation is present at threonine 767. A glycan (O-linked (GlcNAc) serine) is linked at serine 784. Positions 791–827 (NINECASNPCLNQGTCIDDVAGYKCNCPLPYTGATCE) constitute an EGF-like 21; calcium-binding domain. The O-linked (Glc...) serine glycan is linked to serine 797. Threonine 805 is a glycosylation site (O-linked (Fuc...) threonine). Positions 829-867 (VLAPCATSPCKNSGVCKESEDYESFSCVCPTGWQGQTCE) constitute an EGF-like 22 domain. The EGF-like 23; calcium-binding domain occupies 869–905 (DINECVKSPCRHGASCQNTNGSYRCLCQAGYTGRNCE). Asparagine 888 is a glycosylation site (N-linked (GlcNAc...) asparagine). Threonine 900 is a glycosylation site (O-linked (GlcNAc) threonine). The EGF-like 24 domain occupies 907-943 (DIDDCRPNPCHNGGSCTDGVNAAFCDCLPGFQGAFCE). An O-linked (Fuc) serine glycan is attached at serine 921. Positions 945–981 (DINECASNPCQNGANCTDCVDSYTCTCPTGFNGIHCE) constitute an EGF-like 25; calcium-binding domain. A glycan (O-linked (Glc...) serine) is linked at serine 951. An N-linked (GlcNAc...) asparagine glycan is attached at asparagine 959. One can recognise an EGF-like 26 domain in the interval 983-1019 (NTPDCTESSCFNGGTCVDGINSFTCLCPPGFTGSYCQ). Threonine 997 carries O-linked (Fuc...) threonine glycosylation. One can recognise an EGF-like 27; calcium-binding domain in the interval 1021–1057 (DVNECDSRPCLHGGTCQDSYGTYKCTCPQGYTGLNCQ). An O-linked (Glc...) serine glycan is attached at serine 1027. Threonine 1035 is a glycosylation site (O-linked (Fuc...) threonine). 2 consecutive EGF-like domains span residues 1059 to 1095 (LVRW…FNCD) and 1097 to 1143 (LSVS…SYCE). Serine 1065 is a glycosylation site (O-linked (Glc...) serine). Positions 1145-1181 (EVDECSPNPCQNGATCTDYLGGFSCKCVAGYHGSNCS) constitute an EGF-like 30; calcium-binding domain. O-linked (Fuc...) threonine glycosylation occurs at threonine 1159. Asparagine 1179 is a glycosylation site (N-linked (GlcNAc...) asparagine). One can recognise an EGF-like 31; calcium-binding domain in the interval 1183–1219 (EINECLSQPCQNGGTCIDLTNTYKCSCPRGTQGVHCE). O-linked (Glc...) serine glycosylation is present at serine 1189. The O-linked (Fuc...) threonine glycan is linked to threonine 1197. One can recognise an EGF-like 32; calcium-binding domain in the interval 1221 to 1265 (NVDDCHPPLDPASRSPKCFNNGTCVDQVGGYTCTCPPGFVGERCE). Asparagine 1241 carries an N-linked (GlcNAc...) asparagine glycan. 4 consecutive EGF-like domains span residues 1267-1305 (DVNE…RRCE), 1307-1346 (VING…ATCE), 1348-1384 (DART…PECQ), and 1387-1426 (ASSP…LLCH). Serine 1273 carries an O-linked (Glc...) serine glycan. Threonine 1362 is a glycosylation site (O-linked (Fuc...) threonine). Residue threonine 1379 is glycosylated (O-linked (GlcNAc...) threonine). Residue threonine 1402 is glycosylated (O-linked (Fuc...) threonine; alternate). O-linked (GalNAc...) threonine; alternate glycosylation occurs at threonine 1402. LNR repeat units follow at residues 1449–1489 (CELP…PWKN), 1490–1531 (CTQS…CNPL), and 1532–1571 (YDQY…RLAA). Residues aspartate 1457, asparagine 1460, aspartate 1475, and aspartate 1478 each contribute to the Ca(2+) site. The N-linked (GlcNAc...) asparagine glycan is linked to asparagine 1489. 5 disulfide bridges follow: cysteine 1490–cysteine 1514, cysteine 1496–cysteine 1509, cysteine 1505–cysteine 1521, cysteine 1536–cysteine 1549, and cysteine 1545–cysteine 1561. Asparagine 1587 carries an N-linked (GlcNAc...) asparagine glycan. An O-linked (GalNAc...) threonine glycan is attached at threonine 1715. The tract at residues 1718 to 1750 (PPLPSQLHLMYVAAAAFVLLFFVGCGVLLSRKR) is interaction with PSEN1. The chain crosses the membrane as a helical span at residues 1726–1746 (LMYVAAAAFVLLFFVGCGVLL). At 1747 to 2531 (SRKRRRQHGQ…QITHIPEAFK (785 aa)) the chain is on the cytoplasmic side. Lysine 1749 participates in a covalent cross-link: Glycyl lysine isopeptide (Lys-Gly) (interchain with G-Cter in ubiquitin). Residues 1770-1798 (KKKRREPLGEDSVGLKPLKNASDGALMDD) are disordered. Threonine 1851 carries the post-translational modification Phosphothreonine. ANK repeat units lie at residues 1917-1946 (TGET…DANI), 1950-1980 (MGRT…DLDA), 1984-2013 (DGTT…DVNA), 2017-2046 (LGKS…NKDM), and 2050-2079 (KEET…NRDI). Positions 1937–1945 (LLEASADAN) are HIF1AN-binding. Asparagine 1945 is subject to (3S)-3-hydroxyasparagine; by HIF1AN. Residues 2004 to 2012 (LINSHADVN) form an HIF1AN-binding region. Asparagine 2012 is modified ((3S)-3-hydroxyasparagine; by HIF1AN). Disordered regions lie at residues 2141-2185 (SATQ…DSSS), 2382-2428 (QPQN…SLPV), and 2440-2531 (PTSL…EAFK). A compositionally biased stretch (low complexity) spans 2382 to 2395 (QPQNLQPPSQPHLS). The span at 2440 to 2478 (PTSLPSSMVPPMTTTQFLTPPSQHSYSSSPVDNTPSHQL) shows a compositional bias: polar residues. Residues 2488-2503 (PSPESPDQWSSSSPHS) show a composition bias toward low complexity. Residues 2504 to 2524 (NISDWSEGISSPPTSMPSQIT) show a composition bias toward polar residues.

The protein belongs to the NOTCH family. Heterodimer of a C-terminal fragment N(TM) and an N-terminal fragment N(EC) which are probably linked by disulfide bonds. Interacts with DNER, DTX1, DTX2 and RBPJ/RBPSUH. Also interacts with MAML1, MAML2 and MAML3 which act as transcriptional coactivators for NOTCH1. Notch 1 intracellular domain interacts with SNW1; the interaction involves multimerized NOTCH1 NICD and is implicated in a formation of an intermediate preactivation complex which associates with DNA-bound CBF-1/RBPJ. The activated membrane-bound form interacts with AAK1 which promotes NOTCH1 stabilization. Forms a trimeric complex with FBXW7 and SGK1. Interacts with HIF1AN. HIF1AN negatively regulates the function of notch intracellular domain (NICD), accelerating myogenic differentiation. Interacts (via NICD) with SNAI1 (via zinc fingers); the interaction induces SNAI1 degradation via MDM2-mediated ubiquitination and inhibits SNAI1-induced cell invasion. Interacts (via NICD) with MDM2A. Interacts (via NICD) with BCL6; the interaction decreases MAML1 recruitment by NOTCH1 NICD on target genes DNA and inhibits NOTCH1 transactivation activity. Interacts with THBS4. Interacts (via the EGF-like repeat region) with CCN3 (via CTCK domain). Interacts (via EGF-like domains) with DLL4 (via N-terminal DSL and MNNL domains). Interacts with ZMIZ1. Interacts (via NICD domain) with MEGF10 (via the cytoplasmic domain). Interacts with DLL1 and JAG1. Interacts (via NICD domain) with PRAG1. Forms a complex with PRAG1, N1ICD and MAML1, in a MAML1-dependent manner. Interacts (via transmembrane region) with PSEN1; the interaction is direct. Interacts with ZFP64. Synthesized in the endoplasmic reticulum as an inactive form which is proteolytically cleaved by a furin-like convertase in the trans-Golgi network before it reaches the plasma membrane to yield an active, ligand-accessible form. Cleavage results in a C-terminal fragment N(TM) and a N-terminal fragment N(EC). Following ligand binding, it is cleaved by ADAM17 to yield a membrane-associated intermediate fragment called notch extracellular truncation (NEXT). Following endocytosis, this fragment is then cleaved by one of the catalytic subunits of gamma-secretase (PSEN1 or PSEN2) to release a Notch-derived peptide containing the intracellular domain (NICD) from the membrane. In terms of processing, phosphorylated. Post-translationally, O-glycosylated on the EGF-like domains. O-glucosylated at Ser-435 by KDELC1 and KDELC2. Contains both O-linked fucose and O-linked glucose in the EGF-like domains 11, 12 and 13, which are interacting with the residues on DLL4. O-linked glycosylation by GALNT11 is involved in determination of left/right symmetry: glycosylation promotes activation of NOTCH1, possibly by promoting cleavage by ADAM17, modulating the balance between motile and immotile (sensory) cilia at the left-right organiser (LRO). MFNG-, RFNG- and LFNG-mediated modification of O-fucose residues at specific EGF-like domains results in inhibition of its activation by JAG1 and enhancement of its activation by DLL1 via an increased binding to DLL1. Ubiquitinated. Undergoes 'Lys-29'-linked polyubiquitination by ITCH; promotes the lysosomal degradation of non-activated internalized NOTCH1. Deubiquitination by USP12 is required for transport of internalized non-activated receptor from late endosomes to lysosomes for degradation. Monoubiquitination at Lys-1749 is required for activation by gamma-secretase cleavage, it promotes interaction with AAK1, which stabilizes it. Deubiquitination by EIF3F is necessary for nuclear import of activated Notch. In terms of processing, hydroxylated at Asn-1945 and Asn-2012 by HIF1AN. Hydroxylation reduces affinity for HI1AN and may thus indirectly modulate negative regulation of NICD. Expressed in the brain, kidney and spleen. Expressed in postnatal central nervous system (CNS) germinal zones and, in early postnatal life, within numerous cells throughout the CNS. Found in both subventricular and ventricular germinal zones.

It localises to the cell membrane. The protein localises to the late endosome membrane. Its subcellular location is the nucleus. Its function is as follows. Functions as a receptor for membrane-bound ligands Jagged-1 (JAG1), Jagged-2 (JAG2) and Delta-1 (DLL1) to regulate cell-fate determination. Upon ligand activation through the released notch intracellular domain (NICD) it forms a transcriptional activator complex with RBPJ/RBPSUH and activates genes of the enhancer of split locus. Affects the implementation of differentiation, proliferation and apoptotic programs. Involved in angiogenesis; negatively regulates endothelial cell proliferation and migration and angiogenic sprouting. Involved in the maturation of both CD4(+) and CD8(+) cells in the thymus. Important for follicular differentiation and possibly cell fate selection within the follicle. During cerebellar development, functions as a receptor for neuronal DNER and is involved in the differentiation of Bergmann glia. Represses neuronal and myogenic differentiation. May play an essential role in postimplantation development, probably in some aspect of cell specification and/or differentiation. May be involved in mesoderm development, somite formation and neurogenesis. May enhance HIF1A function by sequestering HIF1AN away from HIF1A. Required for the THBS4 function in regulating protective astrogenesis from the subventricular zone (SVZ) niche after injury. Involved in determination of left/right symmetry by modulating the balance between motile and immotile (sensory) cilia at the left-right organiser (LRO). This Rattus norvegicus (Rat) protein is Neurogenic locus notch homolog protein 1 (Notch1).